The chain runs to 234 residues: Orotate phosphoribosyltransferase (234 aa).

Lysine 30 serves as a coordination point for 5-phospho-alpha-D-ribose 1-diphosphate. 38–39 (FF) provides a ligand contact to orotate. 5-phospho-alpha-D-ribose 1-diphosphate is bound by residues 76–77 (YK), arginine 103, lysine 104, lysine 107, histidine 109, and 128–136 (DDVITAGTA). Orotate contacts are provided by threonine 132 and arginine 160.

It belongs to the purine/pyrimidine phosphoribosyltransferase family. PyrE subfamily. Homodimer. The cofactor is Mg(2+).

It carries out the reaction orotidine 5'-phosphate + diphosphate = orotate + 5-phospho-alpha-D-ribose 1-diphosphate. It functions in the pathway pyrimidine metabolism; UMP biosynthesis via de novo pathway; UMP from orotate: step 1/2. In terms of biological role, catalyzes the transfer of a ribosyl phosphate group from 5-phosphoribose 1-diphosphate to orotate, leading to the formation of orotidine monophosphate (OMP). The chain is Orotate phosphoribosyltransferase from Chromohalobacter salexigens (strain ATCC BAA-138 / DSM 3043 / CIP 106854 / NCIMB 13768 / 1H11).